The following is a 629-amino-acid chain: Polygalacturonase non-catalytic subunit AroGP2 (629 aa).

The N-terminal stretch at 1-27 (MHNKILVSSYILLVLLFSLSSFNIVVA) is a signal peptide. Residues 28-109 (KDGDESGNPF…MCAPDLLPSL (82 aa)) constitute a propeptide that is removed on maturation. 7 N-linked (GlcNAc...) asparagine glycosylation sites follow: N125, N143, N255, N277, N333, N368, and N386. Positions 267–293 (YGQNANGENQNFTSYSTNGNNPQNNFK) are enriched in polar residues. Residues 267 to 305 (YGQNANGENQNFTSYSTNGNNPQNNFKNYGVGGNGPSET) form a disordered region. The 215-residue stretch at 414–628 (FFREKMLKSG…FENDMTWATA (215 aa)) folds into the BURP domain.

In terms of assembly, interacts with polygalacturonase to form heterodimers.

Its subcellular location is the secreted. The protein localises to the extracellular space. It is found in the apoplast. It localises to the cell wall. In terms of biological role, non-catalytic subunit of polygalacturonase. This is Polygalacturonase non-catalytic subunit AroGP2 (GP2) from Solanum lycopersicum (Tomato).